Reading from the N-terminus, the 142-residue chain is Large ribosomal subunit protein uL16 (142 aa).

It belongs to the universal ribosomal protein uL16 family. Part of the 50S ribosomal subunit.

In terms of biological role, binds 23S rRNA and is also seen to make contacts with the A and possibly P site tRNAs. This is Large ribosomal subunit protein uL16 from Pseudothermotoga lettingae (strain ATCC BAA-301 / DSM 14385 / NBRC 107922 / TMO) (Thermotoga lettingae).